Reading from the N-terminus, the 388-residue chain is Chorismate synthase (388 aa).

NADP(+) contacts are provided by Arg-39 and Arg-45. Residues 130–132, 251–252, Gly-296, 311–315, and Arg-337 each bind FMN; these read RSS, NA, and KPIPT.

It belongs to the chorismate synthase family. As to quaternary structure, homotetramer. It depends on FMNH2 as a cofactor.

The catalysed reaction is 5-O-(1-carboxyvinyl)-3-phosphoshikimate = chorismate + phosphate. Its pathway is metabolic intermediate biosynthesis; chorismate biosynthesis; chorismate from D-erythrose 4-phosphate and phosphoenolpyruvate: step 7/7. Functionally, catalyzes the anti-1,4-elimination of the C-3 phosphate and the C-6 proR hydrogen from 5-enolpyruvylshikimate-3-phosphate (EPSP) to yield chorismate, which is the branch point compound that serves as the starting substrate for the three terminal pathways of aromatic amino acid biosynthesis. This reaction introduces a second double bond into the aromatic ring system. In Streptococcus agalactiae serotype V (strain ATCC BAA-611 / 2603 V/R), this protein is Chorismate synthase.